The primary structure comprises 441 residues: Polycomb protein EED (441 aa).

The tract at residues 1-72 (MSEREVSTAP…PGRKSWGKGK (72 aa)) is disordered. Residue Ser2 is modified to N-acetylserine. Phosphoserine occurs at positions 2 and 34. A compositionally biased stretch (polar residues) spans 45–61 (ESGTNTERPDTPTNTPN). Position 55 is a phosphothreonine (Thr55). Lys66 carries the post-translational modification N6,N6,N6-trimethyllysine; alternate. Lys66 carries the N6,N6-dimethyllysine; alternate modification. Lys66 bears the N6-methyllysine; alternate mark. The interval 81–441 (SFKCVNSLKE…ASIWRWDRLR (361 aa)) is interaction with EZH2. WD repeat units follow at residues 91–134 (DHNQ…EIRL), 142–185 (DADE…CIKH), 188–228 (GHGN…LVAI), and 234–275 (GHRD…NAIK). 2 required for interaction with the matrix protein MA of HIV-1 regions span residues 149–303 (TCAW…STRD) and 301–441 (TRDI…DRLR). An N6,N6,N6-trimethyllysine; alternate mark is found at Lys197, Lys268, and Lys284. 3 positions are modified to N6,N6-dimethyllysine; alternate: Lys197, Lys268, and Lys284. N6-methyllysine; alternate is present on residues Lys197, Lys268, and Lys284. WD repeat units lie at residues 304-341 (IHRN…DDID), 359-399 (SQCD…PHKA), and 408-441 (KCGA…DRLR).

This sequence belongs to the WD repeat ESC family. In terms of assembly, component of the PRC2/EED-EZH2 complex, which includes EED, EZH2, SUZ12, RBBP4 and RBBP7 and possibly AEBP2. The minimum components required for methyltransferase activity of the PRC2/EED-EZH2 complex are EED, EZH2 and SUZ12. Component of the PRC2/EED-EZH1 complex, which includes EED, EZH1, SUZ12, RBBP4 and AEBP2. The PRC2 complex may also interact with DNMT1, DNMT3A, DNMT3B and PHF1 via the EZH2 subunit and with SIRT1 via the SUZ12 subunit. Interacts with HDAC, HDAC2, histone H1 and YY1. May interact with ITGA4, ITGAE and ITGB7. Interacts with CDYL. Interacts with BMAL1. Interacts with KMT2A/MLL1. As to quaternary structure, (Microbial infection) May interact with the MA protein of HIV-1. Methylated. Binding to histone H1 'Lys-26' promotes mono-, di-, and trimethylation of internal lysines. As to expression, expressed in brain, colon, heart, kidney, liver, lung, muscle, ovary, peripheral blood leukocytes, pancreas, placenta, prostate, spleen, small intestine, testis, thymus and uterus. Appears to be overexpressed in breast and colon cancer.

It is found in the nucleus. The protein resides in the chromosome. In terms of biological role, polycomb group (PcG) protein. Component of the PRC2/EED-EZH2 complex, which methylates 'Lys-9' and 'Lys-27' of histone H3, leading to transcriptional repression of the affected target gene. Also recognizes 'Lys-26' trimethylated histone H1 with the effect of inhibiting PRC2 complex methyltransferase activity on nucleosomal histone H3 'Lys-27', whereas H3 'Lys-27' recognition has the opposite effect, enabling the propagation of this repressive mark. The PRC2/EED-EZH2 complex may also serve as a recruiting platform for DNA methyltransferases, thereby linking two epigenetic repression systems. Genes repressed by the PRC2/EED-EZH2 complex include HOXC8, HOXA9, MYT1 and CDKN2A. This is Polycomb protein EED from Homo sapiens (Human).